Reading from the N-terminus, the 492-residue chain is Linolenate hydroperoxide lyase, chloroplastic (492 aa).

A disordered region spans residues Met1–Leu33. Residues Met1 to Arg34 constitute a chloroplast transit peptide. Residue Cys454 participates in heme binding.

It belongs to the cytochrome P450 family. Heme serves as cofactor. Expressed in roots, leaves, flowers and siliques.

It localises to the plastid. Its subcellular location is the chloroplast. In terms of biological role, catalyzes the conversion of (9Z,11E,15Z)-(13S)-hydroperoxyoctadeca-9,11,15-trienoate to (9Z)-12-oxo-dodec-9-enoate and cis-3-hexenal. Possesses low activity toward (9Z,11E)-(13S)-13-hydroperoxyoctadeca-9,11-dienoate. Required for the synthesis of the green leaf volatiles (GLVs) hexanal and trans-2-hexenal. The protein is Linolenate hydroperoxide lyase, chloroplastic of Arabidopsis thaliana (Mouse-ear cress).